Here is a 396-residue protein sequence, read N- to C-terminus: Tyrosine--tRNA ligase (396 aa).

A 'HIGH' region motif is present at residues 43-52 (PSSPDIHLGH). The 'KMSKS' region signature appears at 227 to 231 (KMSKS). Lys-230 contacts ATP. In terms of domain architecture, S4 RNA-binding spans 338 to 396 (TGVIDFIILSGLAKSKSEARRLLEQGAVEINSEKISDQNTPVKCGDIIKAGKRRYSKAI).

Belongs to the class-I aminoacyl-tRNA synthetase family. TyrS type 2 subfamily. Homodimer.

It localises to the cytoplasm. It carries out the reaction tRNA(Tyr) + L-tyrosine + ATP = L-tyrosyl-tRNA(Tyr) + AMP + diphosphate + H(+). Functionally, catalyzes the attachment of tyrosine to tRNA(Tyr) in a two-step reaction: tyrosine is first activated by ATP to form Tyr-AMP and then transferred to the acceptor end of tRNA(Tyr). The chain is Tyrosine--tRNA ligase from Dehalococcoides mccartyi (strain CBDB1).